Consider the following 392-residue polypeptide: uncharacterized protein (392 aa).

The N-terminal stretch at 1–23 (MWTALVLVWISSVLLPRSHMMSA) is a signal peptide. Over 24–342 (EPRNIVTNKW…DALTPSLVNK (319 aa)) the chain is Extracellular. A glycan (N-linked (GlcNAc...) asparagine) is linked at Asn77. Disordered stretches follow at residues 83-154 (AEVT…PRTA) and 167-320 (AAGT…TDSC). Low complexity predominate over residues 86-97 (TTHGTNTSTPTT). Composition is skewed to polar residues over residues 107–127 (SRTLAVPTSSGPSSAEQTRPT) and 170–249 (TVNT…SAST). An N-linked (GlcNAc...) asparagine glycan is attached at Asn172. 2 stretches are compositionally biased toward low complexity: residues 265–277 (SPTTQPSPTLPTQ) and 284–309 (TLLTTEQVGTKTTSGTASAGPTSRSS). The chain crosses the membrane as a helical span at residues 343 to 363 (MLLLVVLLVGVTLFIAVLVMF). Residues 364 to 392 (ALQAYESYKKKDYTQVDYLINGMYADSEM) are Cytoplasmic-facing.

It is found in the cell membrane. The protein resides in the golgi apparatus. The protein localises to the trans-Golgi network membrane. This is an uncharacterized protein from Mus musculus (Mouse).